Reading from the N-terminus, the 324-residue chain is tRNA dimethylallyltransferase (324 aa).

17-24 lines the ATP pocket; it reads GPTASGKT. Residue 19–24 participates in substrate binding; the sequence is TASGKT. Interaction with substrate tRNA regions lie at residues 42-45, 166-170, 251-256, and 284-291; these read DSAL, QRIQR, RCVGYR, and KRQITWLR.

This sequence belongs to the IPP transferase family. Monomer. Requires Mg(2+) as cofactor.

The catalysed reaction is adenosine(37) in tRNA + dimethylallyl diphosphate = N(6)-dimethylallyladenosine(37) in tRNA + diphosphate. Its function is as follows. Catalyzes the transfer of a dimethylallyl group onto the adenine at position 37 in tRNAs that read codons beginning with uridine, leading to the formation of N6-(dimethylallyl)adenosine (i(6)A). This chain is tRNA dimethylallyltransferase, found in Burkholderia ambifaria (strain MC40-6).